A 314-amino-acid polypeptide reads, in one-letter code: tRNA pseudouridine synthase B (314 aa).

Substrate is bound at residue His43. Asp48 acts as the Nucleophile in catalysis. Substrate is bound by residues Tyr76, Tyr179, and Leu200.

This sequence belongs to the pseudouridine synthase TruB family. Type 1 subfamily.

It carries out the reaction uridine(55) in tRNA = pseudouridine(55) in tRNA. Responsible for synthesis of pseudouridine from uracil-55 in the psi GC loop of transfer RNAs. The polypeptide is tRNA pseudouridine synthase B (Citrobacter koseri (strain ATCC BAA-895 / CDC 4225-83 / SGSC4696)).